The following is a 164-amino-acid chain: UPF0304 protein YfbU (164 aa).

The protein belongs to the UPF0304 family.

This chain is UPF0304 protein YfbU, found in Shigella flexneri serotype 5b (strain 8401).